The primary structure comprises 200 residues: Putative protein ATXN8OS (200 aa).

The segment at 19–39 (PFSGLKEEEEEDGEDDEEEEE) is disordered. The span at 25–39 (EEEEEDGEDDEEEEE) shows a compositional bias: acidic residues.

Expressed in brain. Expressed in muscle tissues (at protein level).

It localises to the cytoplasm. The sequence is that of Putative protein ATXN8OS from Homo sapiens (Human).